The sequence spans 99 residues: Putative protein tag-209 (99 aa).

Positions 1–16 (MLKLLAFVALLSVSVS) are cleaved as a signal peptide.

This is Putative protein tag-209 (tag-209) from Caenorhabditis elegans.